A 282-amino-acid chain; its full sequence is Putative 4-diphosphocytidyl-2-C-methyl-D-erythritol kinase (282 aa).

Residue lysine 9 is part of the active site. 93–103 serves as a coordination point for ATP; it reads PVSAGLAGGSA. Aspartate 135 is an active-site residue.

It belongs to the GHMP kinase family. IspE subfamily.

The catalysed reaction is 4-CDP-2-C-methyl-D-erythritol + ATP = 4-CDP-2-C-methyl-D-erythritol 2-phosphate + ADP + H(+). Functionally, catalyzes the phosphorylation of the position 2 hydroxy group of 4-diphosphocytidyl-2C-methyl-D-erythritol. The protein is Putative 4-diphosphocytidyl-2-C-methyl-D-erythritol kinase of Staphylococcus aureus (strain bovine RF122 / ET3-1).